The chain runs to 196 residues: Probable malonic semialdehyde reductase RutE (196 aa).

It belongs to the nitroreductase family. HadB/RutE subfamily. The cofactor is FMN.

The catalysed reaction is 3-hydroxypropanoate + NADP(+) = 3-oxopropanoate + NADPH + H(+). Its function is as follows. May reduce toxic product malonic semialdehyde to 3-hydroxypropionic acid, which is excreted. The polypeptide is Probable malonic semialdehyde reductase RutE (Escherichia coli O6:H1 (strain CFT073 / ATCC 700928 / UPEC)).